The primary structure comprises 248 residues: Superoxide dismutase [Mn] 1 (248 aa).

The first 41 residues, 1–41 (MQTTFRRILILFVGLLVPLFFACQSNSQVDAAPSAAPQLSA), serve as a signal peptide directing secretion. Mn(2+) contacts are provided by His-68, His-123, Asp-208, and His-212.

This sequence belongs to the iron/manganese superoxide dismutase family. In terms of assembly, homodimer. Requires Mn(2+) as cofactor.

It catalyses the reaction 2 superoxide + 2 H(+) = H2O2 + O2. Its function is as follows. Destroys superoxide anion radicals which are normally produced within the cells and which are toxic to biological systems. The chain is Superoxide dismutase [Mn] 1 (sodA1) from Leptolyngbya boryana (Plectonema boryanum).